The following is a 146-amino-acid chain: Hemoglobin subunit beta (146 aa).

The 145-residue stretch at 2–146 (QWTAEEKQLI…VAHALARKYH (145 aa)) folds into the Globin domain. Heme b contacts are provided by H63 and H92.

This sequence belongs to the globin family. Heterotetramer of two alpha chains and two beta chains. In terms of tissue distribution, red blood cells.

Involved in oxygen transport from the lung to the various peripheral tissues. This Passer montanus (Eurasian tree sparrow) protein is Hemoglobin subunit beta (HBB).